A 1755-amino-acid chain; its full sequence is Transposon Ty1-GR3 Gag-Pol polyprotein (1755 aa).

3 stretches are compositionally biased toward polar residues: residues 1 to 10 (MESQQLSNYP), 48 to 60 (TKAN…TPAS), and 127 to 152 (QSQF…GNTF). 3 disordered regions span residues 1–93 (MESQ…MMTQ), 126–173 (PQSQ…RPPP), and 352–421 (GSRN…SKST). Over residues 153 to 165 (TDSSSADSDMTST) the composition is skewed to low complexity. The RNA-binding stretch occupies residues 299 to 401 (NNGIHINNKV…NSKSKTARAH (103 aa)). Residues 402–418 (NVSTSNNSPSTDNDSIS) show a composition bias toward low complexity. At Ser-416 the chain carries Phosphoserine. The active-site For protease activity; shared with dimeric partner is the Asp-461. Residues 583-640 (NVHTSESTRKYPYPFIHRMLAHANAQTIRYSLKNNTITYFNESDVDWSSAIDYQCPDC) are integrase-type zinc finger-like. Residues 660 to 835 (NSYEPFQYLH…AGLDISTLLP (176 aa)) form the Integrase catalytic domain. Mg(2+) is bound by residues Asp-671 and Asp-736. The tract at residues 956–1172 (SKAVSPTDST…LGGIGDSNAY (217 aa)) is disordered. Over residues 960–969 (SPTDSTPPST) the composition is skewed to low complexity. Polar residues-rich tracts occupy residues 1005-1015 (STPQISNIEST) and 1031-1043 (MSQS…SYAS). The span at 1044–1053 (KSKDFRHSDS) shows a compositional bias: basic and acidic residues. Polar residues-rich tracts occupy residues 1054–1082 (YSDN…QTSE) and 1095–1106 (SIDTSSSESNSL). The Bipartite nuclear localization signal motif lies at 1178–1212 (KKRSLEDNETEIKVSRDTWNTKNMRSLEPPRSKKR). Positions 1338-1476 (NNYYITQLDI…DILGLEIKYQ (139 aa)) constitute a Reverse transcriptase Ty1/copia-type domain. Asp-1346, Asp-1427, Asp-1428, Asp-1610, Glu-1652, and Asp-1685 together coordinate Mg(2+). The RNase H Ty1/copia-type domain occupies 1610-1752 (DASYGNQPYY…IKTFKLLTNK (143 aa)).

The capsid protein forms a homotrimer, from which the VLPs are assembled. The protease is a homodimer, whose active site consists of two apposed aspartic acid residues. Initially, virus-like particles (VLPs) are composed of the structural unprocessed proteins Gag and Gag-Pol, and also contain the host initiator methionine tRNA (tRNA(i)-Met) which serves as a primer for minus-strand DNA synthesis, and a dimer of genomic Ty RNA. Processing of the polyproteins occurs within the particle and proceeds by an ordered pathway, called maturation. First, the protease (PR) is released by autocatalytic cleavage of the Gag-Pol polyprotein yielding capsid protein p45 and a Pol-p154 precursor protein. This cleavage is a prerequisite for subsequent processing of Pol-p154 at the remaining sites to release the mature structural and catalytic proteins. Maturation takes place prior to the RT reaction and is required to produce transposition-competent VLPs.

It is found in the cytoplasm. It localises to the nucleus. It catalyses the reaction DNA(n) + a 2'-deoxyribonucleoside 5'-triphosphate = DNA(n+1) + diphosphate. It carries out the reaction Endonucleolytic cleavage to 5'-phosphomonoester.. Functionally, capsid protein (CA) is the structural component of the virus-like particle (VLP), forming the shell that encapsulates the retrotransposons dimeric RNA genome. The particles are assembled from trimer-clustered units and there are holes in the capsid shells that allow for the diffusion of macromolecules. CA also has nucleocapsid-like chaperone activity, promoting primer tRNA(i)-Met annealing to the multipartite primer-binding site (PBS), dimerization of Ty1 RNA and initiation of reverse transcription. In terms of biological role, the aspartyl protease (PR) mediates the proteolytic cleavages of the Gag and Gag-Pol polyproteins after assembly of the VLP. Reverse transcriptase/ribonuclease H (RT) is a multifunctional enzyme that catalyzes the conversion of the retro-elements RNA genome into dsDNA within the VLP. The enzyme displays a DNA polymerase activity that can copy either DNA or RNA templates, and a ribonuclease H (RNase H) activity that cleaves the RNA strand of RNA-DNA heteroduplexes during plus-strand synthesis and hydrolyzes RNA primers. The conversion leads to a linear dsDNA copy of the retrotransposon that includes long terminal repeats (LTRs) at both ends. Its function is as follows. Integrase (IN) targets the VLP to the nucleus, where a subparticle preintegration complex (PIC) containing at least integrase and the newly synthesized dsDNA copy of the retrotransposon must transit the nuclear membrane. Once in the nucleus, integrase performs the integration of the dsDNA into the host genome. The chain is Transposon Ty1-GR3 Gag-Pol polyprotein (TY1B-GR3) from Saccharomyces cerevisiae (strain ATCC 204508 / S288c) (Baker's yeast).